A 287-amino-acid chain; its full sequence is Light-independent protochlorophyllide reductase iron-sulfur ATP-binding protein (287 aa).

Residues 10–15 (GVGKST) and K39 each bind ATP. S14 is a binding site for Mg(2+). Residues C95 and C129 each coordinate [4Fe-4S] cluster. 181 to 182 (NR) contacts ATP.

This sequence belongs to the NifH/BchL/ChlL family. In terms of assembly, homodimer. Protochlorophyllide reductase is composed of three subunits; BchL, BchN and BchB. [4Fe-4S] cluster is required as a cofactor.

The catalysed reaction is chlorophyllide a + oxidized 2[4Fe-4S]-[ferredoxin] + 2 ADP + 2 phosphate = protochlorophyllide a + reduced 2[4Fe-4S]-[ferredoxin] + 2 ATP + 2 H2O. It functions in the pathway porphyrin-containing compound metabolism; bacteriochlorophyll biosynthesis (light-independent). Its function is as follows. Component of the dark-operative protochlorophyllide reductase (DPOR) that uses Mg-ATP and reduced ferredoxin to reduce ring D of protochlorophyllide (Pchlide) to form chlorophyllide a (Chlide). This reaction is light-independent. The L component serves as a unique electron donor to the NB-component of the complex, and binds Mg-ATP. The protein is Light-independent protochlorophyllide reductase iron-sulfur ATP-binding protein of Heliobacterium modesticaldum (strain ATCC 51547 / Ice1).